The chain runs to 352 residues: Pyrimidine monooxygenase RutA (352 aa).

FMN contacts are provided by residues I49–K50, N115, E124, R140–Y141, and S189.

It belongs to the NtaA/SnaA/DszA monooxygenase family. RutA subfamily.

The catalysed reaction is uracil + FMNH2 + NADH + O2 = (Z)-3-ureidoacrylate + FMN + NAD(+) + H2O + H(+). The enzyme catalyses thymine + FMNH2 + NADH + O2 = (Z)-2-methylureidoacrylate + FMN + NAD(+) + H2O + H(+). In terms of biological role, catalyzes the pyrimidine ring opening between N-3 and C-4 by an unusual flavin hydroperoxide-catalyzed mechanism, adding oxygen atoms in the process to yield ureidoacrylate peracid, that immediately reacts with FMN forming ureidoacrylate and FMN-N(5)-oxide. The FMN-N(5)-oxide reacts spontaneously with NADH to produce FMN. Requires the flavin reductase RutF to regenerate FMN in vivo. In Caulobacter segnis (strain ATCC 21756 / DSM 7131 / JCM 7823 / NBRC 15250 / LMG 17158 / TK0059) (Mycoplana segnis), this protein is Pyrimidine monooxygenase RutA.